We begin with the raw amino-acid sequence, 118 residues long: Large ribosomal subunit protein bL20 (118 aa).

The protein belongs to the bacterial ribosomal protein bL20 family.

Binds directly to 23S ribosomal RNA and is necessary for the in vitro assembly process of the 50S ribosomal subunit. It is not involved in the protein synthesizing functions of that subunit. The sequence is that of Large ribosomal subunit protein bL20 from Leptothrix cholodnii (strain ATCC 51168 / LMG 8142 / SP-6) (Leptothrix discophora (strain SP-6)).